The chain runs to 140 residues: Organic hydroperoxide resistance protein-like 1 (140 aa).

It belongs to the OsmC/Ohr family.

In Staphylococcus epidermidis (strain ATCC 35984 / DSM 28319 / BCRC 17069 / CCUG 31568 / BM 3577 / RP62A), this protein is Organic hydroperoxide resistance protein-like 1.